We begin with the raw amino-acid sequence, 83 residues long: Small ribosomal subunit protein eS21 (83 aa).

The protein belongs to the eukaryotic ribosomal protein eS21 family. Component of the 40S small ribosomal subunit. Interacts with sta.

The protein resides in the cytoplasm. It is found in the cytosol. The protein localises to the rough endoplasmic reticulum. Functionally, may be an associated component of the ribosome rather than a core structural subunit. May act as a translation initiation factor. Has a role in regulation of cell proliferation in the hematopoietic organs and the imaginal disks of larva. The protein is Small ribosomal subunit protein eS21 (RpS21) of Drosophila ananassae (Fruit fly).